The sequence spans 933 residues: uncharacterized protein (933 aa).

Positions 1 to 28 are enriched in polar residues; that stretch reads MNGNLPHIQIQSPKNSLDHLNNGRQATH. Disordered regions lie at residues 1 to 135, 173 to 194, and 252 to 275; these read MNGN…GESD, MDNESSEEERDGIPRVEGNAAD, and ATDFPNLAHESSEPSSSRHTADAQ. Over residues 29–47 the composition is skewed to basic and acidic residues; sequence NFEHGKPGDREEANGHADA. Positions 49 to 59 are enriched in low complexity; it reads SSSGRSRYLSS. Composition is skewed to polar residues over residues 87–101 and 108–135; these read TLSFLNPSRASSNTH and NRSSNVTRTVSGRKSNHGSSLTDTGESD. The segment covering 173 to 182 has biased composition (acidic residues); sequence MDNESSEEER. A compositionally biased stretch (polar residues) spans 264 to 275; the sequence is EPSSSRHTADAQ. WD repeat units follow at residues 314-353, 385-423, 425-465, 467-506, 517-563, 568-607, 617-657, and 665-710; these read SSNNAIWAMKFSRDGRYLAVGGQDRILRIWAVLDSEHARS, GHTADILDLSWSRNNFLLSSSMDKTARLWHPVRKDCLCC, EHSD…VSFW, ELPELITAVAFSPDGGLAIAGTFVGLCLFYDTRGLRFRTQ, AKGS…LELK, ANAQSQNRAYFDDDGNYVICGSEDHQVFIWDLPPQHMHKT, ASVR…SVIS, and PSLR…AARK. Position 722 is a phosphoserine (S722). The disordered stretch occupies residues 756 to 796; the sequence is NASQITNNENNGNDDIKKGDEPEEEHVGLRKNSTQEKNANL. Positions 757–768 are enriched in polar residues; that stretch reads ASQITNNENNGN. The segment covering 769-783 has biased composition (basic and acidic residues); the sequence is DDIKKGDEPEEEHVG.

Its subcellular location is the endoplasmic reticulum. The protein resides in the nucleus. This is an uncharacterized protein from Schizosaccharomyces pombe (strain 972 / ATCC 24843) (Fission yeast).